Reading from the N-terminus, the 255-residue chain is Triosephosphate isomerase (255 aa).

9 to 11 (NWK) is a binding site for substrate. Catalysis depends on His-95, which acts as the Electrophile. Glu-167 functions as the Proton acceptor in the catalytic mechanism. Substrate-binding positions include Gly-173, Ser-212, and 233–234 (GG).

This sequence belongs to the triosephosphate isomerase family. In terms of assembly, homodimer.

It localises to the cytoplasm. It carries out the reaction D-glyceraldehyde 3-phosphate = dihydroxyacetone phosphate. Its pathway is carbohydrate biosynthesis; gluconeogenesis. It participates in carbohydrate degradation; glycolysis; D-glyceraldehyde 3-phosphate from glycerone phosphate: step 1/1. Its function is as follows. Involved in the gluconeogenesis. Catalyzes stereospecifically the conversion of dihydroxyacetone phosphate (DHAP) to D-glyceraldehyde-3-phosphate (G3P). The chain is Triosephosphate isomerase from Salmonella dublin (strain CT_02021853).